Consider the following 238-residue polypeptide: Serine protease SplE (238 aa).

Residues 1–36 (MNKNIIIKSIAALTILTSVTGVGTTMVEGIQQTAKA) form the signal peptide. Active-site charge relay system residues include H75, D113, and S191.

It belongs to the peptidase S1B family.

The protein localises to the secreted. The sequence is that of Serine protease SplE (splE) from Staphylococcus aureus.